The chain runs to 380 residues: Queuine tRNA-ribosyltransferase (380 aa).

Catalysis depends on aspartate 96, which acts as the Proton acceptor. Substrate contacts are provided by residues 96–100 (DSGGF), aspartate 150, glutamine 193, and glycine 220. Positions 251–257 (GVGAPDS) are RNA binding. The active-site Nucleophile is aspartate 270. The interval 275-279 (TRIAR) is RNA binding; important for wobble base 34 recognition. Positions 308, 310, 313, and 339 each coordinate Zn(2+).

This sequence belongs to the queuine tRNA-ribosyltransferase family. As to quaternary structure, homodimer. Within each dimer, one monomer is responsible for RNA recognition and catalysis, while the other monomer binds to the replacement base PreQ1. Zn(2+) is required as a cofactor.

The enzyme catalyses 7-aminomethyl-7-carbaguanine + guanosine(34) in tRNA = 7-aminomethyl-7-carbaguanosine(34) in tRNA + guanine. Its pathway is tRNA modification; tRNA-queuosine biosynthesis. Catalyzes the base-exchange of a guanine (G) residue with the queuine precursor 7-aminomethyl-7-deazaguanine (PreQ1) at position 34 (anticodon wobble position) in tRNAs with GU(N) anticodons (tRNA-Asp, -Asn, -His and -Tyr). Catalysis occurs through a double-displacement mechanism. The nucleophile active site attacks the C1' of nucleotide 34 to detach the guanine base from the RNA, forming a covalent enzyme-RNA intermediate. The proton acceptor active site deprotonates the incoming PreQ1, allowing a nucleophilic attack on the C1' of the ribose to form the product. After dissociation, two additional enzymatic reactions on the tRNA convert PreQ1 to queuine (Q), resulting in the hypermodified nucleoside queuosine (7-(((4,5-cis-dihydroxy-2-cyclopenten-1-yl)amino)methyl)-7-deazaguanosine). This chain is Queuine tRNA-ribosyltransferase, found in Streptococcus pneumoniae (strain Taiwan19F-14).